Here is a 386-residue protein sequence, read N- to C-terminus: Glucose-1-phosphate adenylyltransferase (386 aa).

Residues tyrosine 100, glycine 165, 180–181, and serine 191 contribute to the alpha-D-glucose 1-phosphate site; that span reads EK.

It belongs to the bacterial/plant glucose-1-phosphate adenylyltransferase family. Homotetramer.

It catalyses the reaction alpha-D-glucose 1-phosphate + ATP + H(+) = ADP-alpha-D-glucose + diphosphate. Its pathway is glycan biosynthesis; glycogen biosynthesis. Functionally, involved in the biosynthesis of ADP-glucose, a building block required for the elongation reactions to produce glycogen. Catalyzes the reaction between ATP and alpha-D-glucose 1-phosphate (G1P) to produce pyrophosphate and ADP-Glc. The sequence is that of Glucose-1-phosphate adenylyltransferase from Clostridium botulinum (strain Alaska E43 / Type E3).